A 249-amino-acid polypeptide reads, in one-letter code: Uridylate kinase (249 aa).

Residue 16–19 (KLSG) participates in ATP binding. UMP is bound at residue Gly-57. Gly-58 and Arg-62 together coordinate ATP. Residues Asp-77 and 138 to 145 (AGMPYFST) contribute to the UMP site. Residues Asn-166, Tyr-172, and Asp-175 each contribute to the ATP site.

It belongs to the UMP kinase family. Homohexamer.

It is found in the cytoplasm. It carries out the reaction UMP + ATP = UDP + ADP. The protein operates within pyrimidine metabolism; CTP biosynthesis via de novo pathway; UDP from UMP (UMPK route): step 1/1. Its activity is regulated as follows. Inhibited by UTP. Its function is as follows. Catalyzes the reversible phosphorylation of UMP to UDP. The polypeptide is Uridylate kinase (Bifidobacterium adolescentis (strain ATCC 15703 / DSM 20083 / NCTC 11814 / E194a)).